A 386-amino-acid chain; its full sequence is 5-hydroxytryptamine receptor 1B (386 aa).

Residues 1–42 (MEEQGIQCAPPPPAASQTGVPLTNLSHNCSADGYIYQDSIAL) are Extracellular-facing. Asparagine 24 and asparagine 28 each carry an N-linked (GlcNAc...) asparagine glycan. Residues 43–68 (PWKVLLVALLALITLATTLSNAFVIA) form a helical membrane-spanning segment. At 69–82 (TVYRTRKLHTPANY) the chain is on the cytoplasmic side. The chain crosses the membrane as a helical span at residues 83-107 (LIASLAVTDLLVSILVMPISTMYTV). Over 108–115 (TGRWTLGQ) the chain is Extracellular. The chain crosses the membrane as a helical span at residues 116–141 (VVCDFWLSSDITCCTASIMHLCVIAL). The cysteines at positions 118 and 195 are disulfide-linked. The ergotamine site is built by aspartate 125 and threonine 130. The DRY motif; important for ligand-induced conformation changes and signaling motif lies at 142-144 (DRY). Over 142–161 (DRYWAITDAVEYSAKRTPKR) the chain is Cytoplasmic. The chain crosses the membrane as a helical span at residues 162–180 (AAIMIVLVWVFSISISLPP). At 181 to 201 (FFWRQAKAEEEMLDCFVNTDH) the chain is on the extracellular side. Valine 197 contributes to the ergotamine binding site. Residues 202-225 (VLYTVYSTVGAFYLPTLLLIALYG) traverse the membrane as a helical segment. Topologically, residues 226–311 (RIYVEARSRI…AARERKATKT (86 aa)) are cytoplasmic. The segment covering 255-268 (DSPGSTSSVTSINS) has biased composition (polar residues). The segment at 255-278 (DSPGSTSSVTSINSRAPDVPSESG) is disordered. Residues 312-333 (LGIILGAFIVCWLPFFIISLVM) traverse the membrane as a helical segment. Residues 334-343 (PICKDACWFH) lie on the Extracellular side of the membrane. Residues 344–366 (MAIFDFFNWLGYLNSLINPIIYT) form a helical membrane-spanning segment. An NPxxY motif; important for ligand-induced conformation changes and signaling motif is present at residues 361–365 (NPIIY). Residues 367–386 (MSNEDFKQAFHKLIRFKCAG) are Cytoplasmic-facing. Cysteine 384 carries S-palmitoyl cysteine lipidation.

The protein belongs to the G-protein coupled receptor 1 family. As to quaternary structure, homodimer. Heterodimer with HTR1D. Phosphorylated. Desensitization of the receptor may be mediated by its phosphorylation. Post-translationally, palmitoylated. In terms of tissue distribution, predominantly expressed in striatum and Purkinje cells.

It localises to the cell membrane. G-protein coupled receptor for 5-hydroxytryptamine (serotonin). Also functions as a receptor for ergot alkaloid derivatives, various anxiolytic and antidepressant drugs and other psychoactive substances, such as lysergic acid diethylamide (LSD). Ligand binding causes a conformation change that triggers signaling via guanine nucleotide-binding proteins (G proteins) and modulates the activity of downstream effectors, such as adenylate cyclase. HTR1B is coupled to G(i)/G(o) G alpha proteins and mediates inhibitory neurotransmission by inhibiting adenylate cyclase activity. Arrestin family members inhibit signaling via G proteins and mediate activation of alternative signaling pathways. Regulates the release of 5-hydroxytryptamine, dopamine and acetylcholine in the brain, and thereby affects neural activity, nociceptive processing, pain perception, mood and behavior. Besides, plays a role in vasoconstriction of cerebral arteries. This chain is 5-hydroxytryptamine receptor 1B (Htr1b), found in Mus musculus (Mouse).